The chain runs to 99 residues: MIPLKMLLLVTLLLGASLQVTHAARGTNVGRECCLEYFKGAIPISRLTRWYKTSGECPKDAIVFVTVQGKSICSDPKDKRVKKAVRYLQRTWKGGPQES.

The signal sequence occupies residues 1 to 23 (MIPLKMLLLVTLLLGASLQVTHA). 2 cysteine pairs are disulfide-bonded: Cys33-Cys57 and Cys34-Cys73.

This sequence belongs to the intercrine beta (chemokine CC) family. As to expression, expressed in thymus, spleen, lymph node, lung and heart.

It localises to the secreted. Functionally, chemokine, which displays chemotactic activity for T lymphocytes, preferentially Th2 cells, but not monocytes or granulocytes. Therefore plays an important role in a wide range of inflammatory and immunological processes. Acts by binding to CCR4 at T-cell surface. Mediates GM-CSF/CSF2-driven pain and inflammation. In the brain, required to maintain the typical, highly branched morphology of hippocampal microglia under homeostatic conditions. May be important for the appropriate adaptation of microglial morphology and synaptic plasticity to acute lipopolysaccharide (LPS)-induced neuroinflammation. Plays a role in wound healing, mainly by inducing fibroblast migration into the wound. In Canis lupus familiaris (Dog), this protein is C-C motif chemokine 17 (CCL17).